The chain runs to 121 residues: Basic phospholipase A2 VRV-PL-V (121 aa).

Intrachain disulfides connect cysteine 26–cysteine 115, cysteine 28–cysteine 44, cysteine 43–cysteine 95, cysteine 49–cysteine 121, cysteine 50–cysteine 88, cysteine 57–cysteine 81, and cysteine 75–cysteine 86. Tyrosine 27, glycine 29, and glycine 31 together coordinate Ca(2+). Histidine 47 is an active-site residue. Aspartate 48 is a binding site for Ca(2+). Residue aspartate 89 is part of the active site.

The protein belongs to the phospholipase A2 family. Group II subfamily. D49 sub-subfamily. In terms of assembly, monomer. It depends on Ca(2+) as a cofactor. As to expression, expressed by the venom gland.

Its subcellular location is the secreted. The catalysed reaction is a 1,2-diacyl-sn-glycero-3-phosphocholine + H2O = a 1-acyl-sn-glycero-3-phosphocholine + a fatty acid + H(+). Functionally, snake venom phospholipase A2 (PLA2) that has a low enzymatic activity. PLA2 catalyzes the calcium-dependent hydrolysis of the 2-acyl groups in 3-sn-phosphoglycerides. The protein is Basic phospholipase A2 VRV-PL-V of Daboia russelii (Russel's viper).